Here is a 156-residue protein sequence, read N- to C-terminus: Small ribosomal subunit protein uS7 (156 aa).

Belongs to the universal ribosomal protein uS7 family. As to quaternary structure, part of the 30S ribosomal subunit. Contacts proteins S9 and S11.

Functionally, one of the primary rRNA binding proteins, it binds directly to 16S rRNA where it nucleates assembly of the head domain of the 30S subunit. Is located at the subunit interface close to the decoding center, probably blocks exit of the E-site tRNA. In Shewanella frigidimarina (strain NCIMB 400), this protein is Small ribosomal subunit protein uS7.